Reading from the N-terminus, the 758-residue chain is Polyribonucleotide nucleotidyltransferase (758 aa).

Positions 488 and 494 each coordinate Mg(2+). A KH domain is found at P555–I614. The region spanning G624–R692 is the S1 motif domain. Residues R692–A758 are disordered. The segment covering P707–A735 has biased composition (basic and acidic residues). A compositionally biased stretch (low complexity) spans G736–Q745.

Belongs to the polyribonucleotide nucleotidyltransferase family. Mg(2+) is required as a cofactor.

It localises to the cytoplasm. The catalysed reaction is RNA(n+1) + phosphate = RNA(n) + a ribonucleoside 5'-diphosphate. Its function is as follows. Involved in mRNA degradation. Catalyzes the phosphorolysis of single-stranded polyribonucleotides processively in the 3'- to 5'-direction. The sequence is that of Polyribonucleotide nucleotidyltransferase from Paracidovorax citrulli (strain AAC00-1) (Acidovorax citrulli).